A 250-amino-acid chain; its full sequence is MILYEYPFNERVRAYLRLEYLFDRLFYFAREGDARHHQIAVATLFDILDATERTDIKTSVLQDLERQRAALQALRDHPGVAQDALESMLAEMERTVSGLAGQGRAGQPLRENEWLVSLRGRLAVPGGATQVDMPSYHAWQHRTEAVRCADLQTWTAPLRPLHDAVAMALRLLRESGRRSEIVAEQGGYQQMLAGKLFQLLRVWIDPAQGVFPEISANKYMIWIRFSAQDGDAKPQQVARNIDFQMSLCSS.

It belongs to the ZapD family. As to quaternary structure, interacts with FtsZ.

Its subcellular location is the cytoplasm. In terms of biological role, cell division factor that enhances FtsZ-ring assembly. Directly interacts with FtsZ and promotes bundling of FtsZ protofilaments, with a reduction in FtsZ GTPase activity. The chain is Cell division protein ZapD from Bordetella petrii (strain ATCC BAA-461 / DSM 12804 / CCUG 43448).